The primary structure comprises 236 residues: Phosphoribosylaminoimidazole-succinocarboxamide synthase (236 aa).

It belongs to the SAICAR synthetase family.

It carries out the reaction 5-amino-1-(5-phospho-D-ribosyl)imidazole-4-carboxylate + L-aspartate + ATP = (2S)-2-[5-amino-1-(5-phospho-beta-D-ribosyl)imidazole-4-carboxamido]succinate + ADP + phosphate + 2 H(+). It participates in purine metabolism; IMP biosynthesis via de novo pathway; 5-amino-1-(5-phospho-D-ribosyl)imidazole-4-carboxamide from 5-amino-1-(5-phospho-D-ribosyl)imidazole-4-carboxylate: step 1/2. The protein is Phosphoribosylaminoimidazole-succinocarboxamide synthase of Rickettsia bellii (strain OSU 85-389).